We begin with the raw amino-acid sequence, 500 residues long: MPLMDVHWLIYVAFGAWLCSYVIHVLSSSSTVKVPVVGYRSVFEPTWLLRLRFVWEGGSIIGQGYNKFKDSIFQVRKLGTDIVIIPPNYIDEVRKLSQDKTRSVEPFINDFAGQYTRGMVFLQSDLQNRVIQQRLTPKLVSLTKVMKEELDYALTKEMPDMKNDEWVEVDISSIMVRLISRISARVFLGPEHCRNQEWLTTTAEYSESLFITGFILRVVPHILRPFIAPLLPSYRTLLRNVSSGRRVIGDIIRSQQGDGNEDILSWMRDAATGEEKQIDNIAQRMLILSLASIHTTAMTMTHAMYDLCACPEYIEPLRDEVKSVVGASGWDKTALNRFHKLDSFLKESQRFNPVFLLTFNRIYHQSMTLSDGTNIPSGTRIAVPSHAMLQDSAHVPGPTPPTEFDGFRYSKIRSDSNYAQKYLFSMTDSSNMAFGYGKYACPGRFYASNEMKLTLAILLLQFEFKLPDGKGRPRNITIDSDMIPDPRARLCVRKRSLRDE.

A helical transmembrane segment spans residues 6–26 (VHWLIYVAFGAWLCSYVIHVL). Residue Asn-240 is glycosylated (N-linked (GlcNAc...) asparagine). Cys-441 contacts heme. Asn-475 carries N-linked (GlcNAc...) asparagine glycosylation.

It belongs to the cytochrome P450 family. It depends on heme as a cofactor.

The protein localises to the membrane. It carries out the reaction ent-kaur-16-ene + 3 reduced [NADPH--hemoprotein reductase] + 3 O2 = ent-kaur-16-en-19-oate + 3 oxidized [NADPH--hemoprotein reductase] + 4 H2O + 4 H(+). It functions in the pathway plant hormone biosynthesis; gibberellin biosynthesis. Functionally, ent-kaurene oxidase; part of the gene cluster that mediates the biosynthesis of gibberellins (GAs), diterpenoids that may provide a selective advantage during infection of the preferred host plant, rice. Gibberellins (GAs) are diterpenoids and are synthesized via the mevalonate pathway. Biosynthesis of the major metabolite GA3 (gibberellic acid) from geranylgeranyl diphosphate (GGPP) requires 13 steps. The GGPP produced by the geranylgeranyl diphosphate synthase GGS2 is converted to ent-kaurene via ent-copalyldiphosphate in a two-step cyclization reaction performed by the bifunctional ent-copalyl diphosphate synthase/ent-kaurene synthase enzyme (CPS/KS). Ent-Kaurene is metabolized to GAs by a series of oxidation reactions catalyzed by cytochrome P450 monooxygenases. Cytochrome P450 monooxygenase P450-4 is an ent-kaurene oxidase that catalyzes the three oxidation steps between ent-kaurene and ent-kaurenoic acid. The highly multifunctional cytochrome P450 monooxygenase P450-1 then catalyzes four steps involving oxidation at two carbon atoms, in the main pathway from ent-kaurenoic acid to GA14 via GA12-aldehyde as well as producing kaurenolides and fujenoic acids as by-products. The cytochrome P450 monooxygenase P450-2 then converts GA14 to GA4 by removal of C-20. GA4 is further converted to GA7 by the GA4 desaturase DES via 1,2-desaturation before cytochrome P450 monooxygenase P450-3, a 13-hydroxylase, hydroxylates GA7 to GA3, the final product of the GA-biosynthetic pathway. The sequence is that of Ent-kaurene oxidase P450-4 from Gibberella fujikuroi (strain CBS 195.34 / IMI 58289 / NRRL A-6831) (Bakanae and foot rot disease fungus).